Here is a 273-residue protein sequence, read N- to C-terminus: Energy-coupling factor transporter ATP-binding protein EcfA (273 aa).

Residues 2–237 (ISIRDLTYFY…RASLLALGLA (236 aa)) form the ABC transporter domain. 36-43 (GRNGSGKS) is a binding site for ATP.

This sequence belongs to the ABC transporter superfamily. Energy-coupling factor EcfA family. As to quaternary structure, forms a stable energy-coupling factor (ECF) transporter complex composed of 2 membrane-embedded substrate-binding proteins (S component), 2 ATP-binding proteins (A component) and 2 transmembrane proteins (T component).

The protein resides in the cell membrane. In terms of biological role, ATP-binding (A) component of a common energy-coupling factor (ECF) ABC-transporter complex. Unlike classic ABC transporters this ECF transporter provides the energy necessary to transport a number of different substrates. The polypeptide is Energy-coupling factor transporter ATP-binding protein EcfA (Syntrophomonas wolfei subsp. wolfei (strain DSM 2245B / Goettingen)).